The following is a 416-amino-acid chain: Maltoporin (416 aa).

A signal peptide spans 1–26 (MELTMKKVSVIAAAVAATLAAGSAFA).

Belongs to the porin LamB (TC 1.B.3) family. Homotrimer formed of three 18-stranded antiparallel beta-barrels, containing three independent channels.

It is found in the cell outer membrane. It catalyses the reaction beta-maltose(in) = beta-maltose(out). In terms of biological role, involved in the transport of maltose and maltodextrins. The sequence is that of Maltoporin from Vibrio cholerae serotype O1 (strain ATCC 39541 / Classical Ogawa 395 / O395).